The sequence spans 230 residues: 5'-methylthioadenosine/S-adenosylhomocysteine nucleosidase (230 aa).

The Proton acceptor role is filled by E12. Substrate-binding positions include G78, I153, and 174-175 (ME). The Proton donor role is filled by D198.

The protein belongs to the PNP/UDP phosphorylase family. MtnN subfamily.

It catalyses the reaction S-adenosyl-L-homocysteine + H2O = S-(5-deoxy-D-ribos-5-yl)-L-homocysteine + adenine. It carries out the reaction S-methyl-5'-thioadenosine + H2O = 5-(methylsulfanyl)-D-ribose + adenine. The enzyme catalyses 5'-deoxyadenosine + H2O = 5-deoxy-D-ribose + adenine. Its pathway is amino-acid biosynthesis; L-methionine biosynthesis via salvage pathway; S-methyl-5-thio-alpha-D-ribose 1-phosphate from S-methyl-5'-thioadenosine (hydrolase route): step 1/2. Its function is as follows. Catalyzes the irreversible cleavage of the glycosidic bond in both 5'-methylthioadenosine (MTA) and S-adenosylhomocysteine (SAH/AdoHcy) to adenine and the corresponding thioribose, 5'-methylthioribose and S-ribosylhomocysteine, respectively. Also cleaves 5'-deoxyadenosine, a toxic by-product of radical S-adenosylmethionine (SAM) enzymes, into 5-deoxyribose and adenine. The sequence is that of 5'-methylthioadenosine/S-adenosylhomocysteine nucleosidase from Shewanella pealeana (strain ATCC 700345 / ANG-SQ1).